Reading from the N-terminus, the 239-residue chain is tRNA uridine(34) hydroxylase (239 aa).

The region spanning 124 to 214 (QGRELVMLDT…GILKYFEETD (91 aa)) is the Rhodanese domain. Residue Cys178 is the Cysteine persulfide intermediate of the active site.

This sequence belongs to the TrhO family.

The enzyme catalyses uridine(34) in tRNA + AH2 + O2 = 5-hydroxyuridine(34) in tRNA + A + H2O. Catalyzes oxygen-dependent 5-hydroxyuridine (ho5U) modification at position 34 in tRNAs. The chain is tRNA uridine(34) hydroxylase from Bordetella parapertussis (strain 12822 / ATCC BAA-587 / NCTC 13253).